The following is a 309-amino-acid chain: Nudix hydrolase 14, chloroplastic (309 aa).

The transit peptide at M1–S60 directs the protein to the chloroplast. A Nudix hydrolase domain is found at A139–E292. Residues M179–G200 carry the Nudix box motif. Mg(2+) contacts are provided by E194 and E198.

It belongs to the Nudix hydrolase family. Homodimer. Requires Mg(2+) as cofactor. Mn(2+) is required as a cofactor. In terms of tissue distribution, expressed in roots, leaves, stems and inflorescences.

The protein localises to the plastid. Its subcellular location is the chloroplast. It catalyses the reaction ADP-sugar + H2O = AMP + alpha-D-aldose 1-phosphate.. Functionally, mediates the hydrolysis of some nucleoside diphosphate derivatives. Can use ADP-glucose, ADP-mannose and ADP-ribose as substrates. Regulates the intracellular ADP-glucose levels linked to starch biosynthesis. The sequence is that of Nudix hydrolase 14, chloroplastic (NUDT14) from Arabidopsis thaliana (Mouse-ear cress).